Reading from the N-terminus, the 82-residue chain is RNA-binding protein Hfq (82 aa).

Positions 11-71 constitute a Sm domain; that stretch reads DTFLNHVRKT…ISTIMPGAPI (61 aa).

Belongs to the Hfq family. In terms of assembly, homohexamer.

In terms of biological role, RNA chaperone that binds small regulatory RNA (sRNAs) and mRNAs to facilitate mRNA translational regulation in response to envelope stress, environmental stress and changes in metabolite concentrations. Also binds with high specificity to tRNAs. This is RNA-binding protein Hfq from Rhodopseudomonas palustris (strain HaA2).